The primary structure comprises 247 residues: NAD(P)H-quinone oxidoreductase subunit K, chloroplastic (247 aa).

[4Fe-4S] cluster-binding residues include C61, C62, C126, and C157.

This sequence belongs to the complex I 20 kDa subunit family. In terms of assembly, NDH is composed of at least 16 different subunits, 5 of which are encoded in the nucleus. [4Fe-4S] cluster is required as a cofactor.

It localises to the plastid. The protein localises to the chloroplast thylakoid membrane. It catalyses the reaction a plastoquinone + NADH + (n+1) H(+)(in) = a plastoquinol + NAD(+) + n H(+)(out). The enzyme catalyses a plastoquinone + NADPH + (n+1) H(+)(in) = a plastoquinol + NADP(+) + n H(+)(out). NDH shuttles electrons from NAD(P)H:plastoquinone, via FMN and iron-sulfur (Fe-S) centers, to quinones in the photosynthetic chain and possibly in a chloroplast respiratory chain. The immediate electron acceptor for the enzyme in this species is believed to be plastoquinone. Couples the redox reaction to proton translocation, and thus conserves the redox energy in a proton gradient. This Anthoceros angustus (Hornwort) protein is NAD(P)H-quinone oxidoreductase subunit K, chloroplastic.